Consider the following 151-residue polypeptide: Acidic phospholipase A2 3 (151 aa).

The signal sequence occupies residues 1–27; sequence MYPAHLLVLLAVCVSLLGAASIPARPL. Cystine bridges form between cysteine 38–cysteine 104, cysteine 54–cysteine 151, cysteine 56–cysteine 72, cysteine 71–cysteine 132, cysteine 78–cysteine 125, cysteine 88–cysteine 118, and cysteine 111–cysteine 123. Residues tyrosine 55, glycine 57, and glycine 59 each coordinate Ca(2+). Histidine 75 is an active-site residue. A Ca(2+)-binding site is contributed by aspartate 76. Aspartate 126 is an active-site residue.

Belongs to the phospholipase A2 family. Group I subfamily. D49 sub-subfamily. Requires Ca(2+) as cofactor. As to expression, expressed by the venom gland.

The protein localises to the secreted. The enzyme catalyses a 1,2-diacyl-sn-glycero-3-phosphocholine + H2O = a 1-acyl-sn-glycero-3-phosphocholine + a fatty acid + H(+). In terms of biological role, PLA2 catalyzes the calcium-dependent hydrolysis of the 2-acyl groups in 3-sn-phosphoglycerides. The sequence is that of Acidic phospholipase A2 3 from Tropidechis carinatus (Australian rough-scaled snake).